The chain runs to 292 residues: 4-hydroxy-tetrahydrodipicolinate synthase (292 aa).

Residue T45 coordinates pyruvate. Y133 (proton donor/acceptor) is an active-site residue. K161 functions as the Schiff-base intermediate with substrate in the catalytic mechanism. I203 contributes to the pyruvate binding site.

It belongs to the DapA family. Homotetramer; dimer of dimers.

The protein localises to the cytoplasm. It catalyses the reaction L-aspartate 4-semialdehyde + pyruvate = (2S,4S)-4-hydroxy-2,3,4,5-tetrahydrodipicolinate + H2O + H(+). It functions in the pathway amino-acid biosynthesis; L-lysine biosynthesis via DAP pathway; (S)-tetrahydrodipicolinate from L-aspartate: step 3/4. Functionally, catalyzes the condensation of (S)-aspartate-beta-semialdehyde [(S)-ASA] and pyruvate to 4-hydroxy-tetrahydrodipicolinate (HTPA). This Nitrosomonas europaea (strain ATCC 19718 / CIP 103999 / KCTC 2705 / NBRC 14298) protein is 4-hydroxy-tetrahydrodipicolinate synthase.